The following is a 484-amino-acid chain: Trigger factor (484 aa).

A PPIase FKBP-type domain is found at 162–243 (GDFISIDLSA…VKSVKERELP (82 aa)). The tract at residues 427–484 (DGNTIDTSEFFGKPPENDVTDLLDDDADGDAGVDADGDTENSAEPADADSADTAQGAG) is disordered. Acidic residues predominate over residues 444–476 (DVTDLLDDDADGDAGVDADGDTENSAEPADADS).

The protein belongs to the FKBP-type PPIase family. Tig subfamily.

It is found in the cytoplasm. It catalyses the reaction [protein]-peptidylproline (omega=180) = [protein]-peptidylproline (omega=0). Involved in protein export. Acts as a chaperone by maintaining the newly synthesized protein in an open conformation. Functions as a peptidyl-prolyl cis-trans isomerase. The sequence is that of Trigger factor from Mycobacterium ulcerans (strain Agy99).